A 113-amino-acid chain; its full sequence is Dolichyl-diphosphooligosaccharide--protein glycosyltransferase subunit DAD1 (113 aa).

At Ser2 the chain carries N-acetylserine. Over 2–30 the chain is Cytoplasmic; it reads SASVLSVISRFLEEYLSSTPQRLKLLDAY. Residues 31–51 traverse the membrane as a helical segment; that stretch reads LLYILLTGALQFGYCLLVGTF. Position 52 (Pro52) is a topological domain, lumenal. Residues 53-73 form a helical membrane-spanning segment; sequence FNSFLSGFISCVGSFILAVCL. The Cytoplasmic segment spans residues 74-92; that stretch reads RIQINPQNKADFQGISPER. A helical membrane pass occupies residues 93–113; sequence AFADFLFASTILHLVVMNFVG.

The protein belongs to the DAD/OST2 family. As to quaternary structure, component of the oligosaccharyltransferase (OST) complex. OST exists in two different complex forms which contain common core subunits RPN1, RPN2, OST48, OST4, DAD1 and TMEM258, either STT3A or STT3B as catalytic subunits, and form-specific accessory subunits. STT3A complex assembly occurs through the formation of 3 subcomplexes. Subcomplex 1 contains RPN1 and TMEM258, subcomplex 2 contains the STT3A-specific subunits STT3A, DC2/OSTC, and KCP2 as well as the core subunit OST4, and subcomplex 3 contains RPN2, DAD1, and OST48. The STT3A complex can form stable complexes with the Sec61 complex or with both the Sec61 and TRAP complexes.

It localises to the endoplasmic reticulum membrane. The protein operates within protein modification; protein glycosylation. In terms of biological role, subunit of the oligosaccharyl transferase (OST) complex that catalyzes the initial transfer of a defined glycan (Glc(3)Man(9)GlcNAc(2) in eukaryotes) from the lipid carrier dolichol-pyrophosphate to an asparagine residue within an Asn-X-Ser/Thr consensus motif in nascent polypeptide chains, the first step in protein N-glycosylation. N-glycosylation occurs cotranslationally and the complex associates with the Sec61 complex at the channel-forming translocon complex that mediates protein translocation across the endoplasmic reticulum (ER). All subunits are required for a maximal enzyme activity. The polypeptide is Dolichyl-diphosphooligosaccharide--protein glycosyltransferase subunit DAD1 (Sus scrofa (Pig)).